The following is a 438-amino-acid chain: 3-phosphoshikimate 1-carboxyvinyltransferase (438 aa).

Lys20, Ser21, and Arg25 together coordinate 3-phosphoshikimate. Residue Lys20 coordinates phosphoenolpyruvate. Residues Gly90 and Arg118 each contribute to the phosphoenolpyruvate site. 3-phosphoshikimate contacts are provided by Ser163, Ser164, Gln165, Ser191, Asp320, and Lys347. Gln165 contacts phosphoenolpyruvate. The active-site Proton acceptor is the Asp320. Residues Arg351 and Arg392 each contribute to the phosphoenolpyruvate site.

It belongs to the EPSP synthase family. In terms of assembly, monomer.

Its subcellular location is the cytoplasm. It carries out the reaction 3-phosphoshikimate + phosphoenolpyruvate = 5-O-(1-carboxyvinyl)-3-phosphoshikimate + phosphate. It functions in the pathway metabolic intermediate biosynthesis; chorismate biosynthesis. Catalyzes the transfer of the enolpyruvyl moiety of phosphoenolpyruvate (PEP) to the 5-hydroxyl of shikimate-3-phosphate (S3P) to produce enolpyruvyl shikimate-3-phosphate and inorganic phosphate. The chain is 3-phosphoshikimate 1-carboxyvinyltransferase from Natronomonas pharaonis (strain ATCC 35678 / DSM 2160 / CIP 103997 / JCM 8858 / NBRC 14720 / NCIMB 2260 / Gabara) (Halobacterium pharaonis).